The sequence spans 144 residues: UPF0306 protein Spro_0510 (144 aa).

It belongs to the UPF0306 family.

This Serratia proteamaculans (strain 568) protein is UPF0306 protein Spro_0510.